The following is a 257-amino-acid chain: Zinc-finger homeodomain protein 6 (257 aa).

The interval 1 to 35 (MEFRGHDEPVDEMGVAYGRTPPSSSSSPAASASAG) is disordered. A compositionally biased stretch (low complexity) spans 21 to 35 (PPSSSSSPAASASAG). The ZF-HD dimerization-type; degenerate zinc-finger motif lies at 45 to 93 (YHECLRNHAAAMGGHVVDGCGEFMPMPGDAADALKCAACGCHRSFHRKD). A compositionally biased stretch (pro residues) spans 106–125 (PSPPTPRVPLLMPPPQPQPH). Disordered stretches follow at residues 106 to 182 (PSPP…TKFT) and 228 to 257 (NNKS…QQQQ). Residues 141 to 155 (YHHTPSGSGGTTTES) are compositionally biased toward low complexity. A DNA-binding region (homeobox) is located at residues 174–237 (RKRFRTKFTP…NNKSSIGSSS (64 aa)). Residues 242–257 (RRQPQEQQSQQQQQQQ) are compositionally biased toward low complexity.

As to quaternary structure, homo- and heterodimer with other ZFHD proteins.

Its subcellular location is the nucleus. In terms of biological role, putative transcription factor. The sequence is that of Zinc-finger homeodomain protein 6 (ZHD6) from Oryza sativa subsp. indica (Rice).